Consider the following 210-residue polypeptide: Large ribosomal subunit protein uL3 (210 aa).

Residues 125 to 151 are disordered; that stretch reads RHGQSRGPMSHGSRYHRRPGSMGPVAP.

This sequence belongs to the universal ribosomal protein uL3 family. In terms of assembly, part of the 50S ribosomal subunit. Forms a cluster with proteins L14 and L19.

Functionally, one of the primary rRNA binding proteins, it binds directly near the 3'-end of the 23S rRNA, where it nucleates assembly of the 50S subunit. The protein is Large ribosomal subunit protein uL3 of Bacillus cereus (strain Q1).